A 65-amino-acid chain; its full sequence is Beta-defensin 106A (65 aa).

The N-terminal stretch at 1-20 (MRTFLFLFVVLFFLTPAKNA) is a signal peptide. Intrachain disulfides connect C26–C53, C33–C47, and C37–C54.

It belongs to the beta-defensin family. As to quaternary structure, monomer. Interacts with CCR2 (via extracellular N-terminal region); this interaction may preferentially require specific tyrosine sulfation on CCR2.

It is found in the secreted. The protein resides in the membrane. Functionally, has antibacterial activity. Acts as a ligand for C-C chemokine receptor CCR2. The chain is Beta-defensin 106A (DEFB106A) from Hylobates lar (Lar gibbon).